The following is a 181-amino-acid chain: Large ribosomal subunit protein uL10 (181 aa).

This sequence belongs to the universal ribosomal protein uL10 family. In terms of assembly, part of the ribosomal stalk of the 50S ribosomal subunit. The N-terminus interacts with L11 and the large rRNA to form the base of the stalk. The C-terminus forms an elongated spine to which L12 dimers bind in a sequential fashion forming a multimeric L10(L12)X complex.

Its function is as follows. Forms part of the ribosomal stalk, playing a central role in the interaction of the ribosome with GTP-bound translation factors. The protein is Large ribosomal subunit protein uL10 of Nostoc sp. (strain PCC 7120 / SAG 25.82 / UTEX 2576).